The sequence spans 196 residues: uncharacterized protein (196 aa).

The tract at residues 44 to 80 (RSVAVPGTEGKKAQNLRQLPAARLTYPTSSSTRPSHA) is disordered.

This is an uncharacterized protein from Treponema pallidum (strain Nichols).